Consider the following 554-residue polypeptide: DM7 family protein GG17593 (554 aa).

The protein belongs to the DM7 family.

The protein is DM7 family protein GG17593 of Drosophila erecta (Fruit fly).